Here is a 201-residue protein sequence, read N- to C-terminus: Phosphoprotein (201 aa).

2 disordered regions span residues 1–70 and 176–201; these read MATR…EQLS and PSHP…DIIP. Short sequence motifs (nuclear localization signal) lie at residues 29 to 36 and 181 to 193; these read PRPRKVPR and PPRI…SAPT.

Homomultimer; only active in its oligomeric state. Interacts with nucleoprotein/N. Interacts with matrix/M protein. Interacts with host TBK1. Interacts with polymerase L. Interacts with host HMGB1; this interaction is required to stabilize RNP on chromosomes. Post-translationally, phosphorylated by host PKC epsilon and casein kinase II.

Its subcellular location is the host nucleus. It localises to the host cytoplasm. Functionally, essential component of the RNA polymerase transcription and replication complex. Acts as a scaffold which brings L in close proximity to the N-RNA complex. Plays a role in the segregation of the viral genome in host daughter cells during mitosis by interacting with host HMGB1, a host chromatin-remodeling DNA architectural protein, thereby stabilizing RNP on chromosomes. Interacts with host TBK1 and thus interferes with activation of cellular antiviral state. Inhibits cellular histone acetyltransferase activities. This chain is Phosphoprotein (P/X), found in Bos taurus (Bovine).